We begin with the raw amino-acid sequence, 255 residues long: MSIRVIIAGFKGKMGQAACQMVLTDPDLDLVAVLDPFESESEWQGIPVFKDKADLACFEADVWVDFTTPAVAYENTRFALENGFAPVVGTTGFTSEEIAELKEFSRTQDLGGLIAPNFALGAVLLMQFATQAAKYFPNVEIIELHHDKKKDAPSGTAIKTAELMAEIRESIQQGAADEEELIAGARGADFDGMRIHSVRLPGLVAHQEVIFGNQGEGLTLRHDSYDRISFMTGVNLGIKEVVKRHELVYGLEHLL.

Residues 9–14 (GFKGKM), Asp35, 89–91 (GTT), and 115–118 (APNF) contribute to the NAD(+) site. The Proton donor/acceptor role is filled by His145. (S)-2,3,4,5-tetrahydrodipicolinate is bound at residue His146. Residue Lys149 is the Proton donor of the active site. 155–156 (GT) contacts (S)-2,3,4,5-tetrahydrodipicolinate.

It belongs to the DapB family.

It localises to the cytoplasm. It carries out the reaction (S)-2,3,4,5-tetrahydrodipicolinate + NAD(+) + H2O = (2S,4S)-4-hydroxy-2,3,4,5-tetrahydrodipicolinate + NADH + H(+). The enzyme catalyses (S)-2,3,4,5-tetrahydrodipicolinate + NADP(+) + H2O = (2S,4S)-4-hydroxy-2,3,4,5-tetrahydrodipicolinate + NADPH + H(+). Its pathway is amino-acid biosynthesis; L-lysine biosynthesis via DAP pathway; (S)-tetrahydrodipicolinate from L-aspartate: step 4/4. Functionally, catalyzes the conversion of 4-hydroxy-tetrahydrodipicolinate (HTPA) to tetrahydrodipicolinate. The sequence is that of 4-hydroxy-tetrahydrodipicolinate reductase from Streptococcus pneumoniae (strain P1031).